Reading from the N-terminus, the 319-residue chain is Molybdenum cofactor biosynthesis bifunctional protein (319 aa).

The interval 1 to 145 (MIDVGDKAVT…GKSGHWQRPA (145 aa)) is molybdenum cofactor biosynthesis protein C. Substrate is bound by residues 61–63 (LCH) and 99–100 (ME). Aspartate 114 is a catalytic residue. The interval 146 to 319 (IAPDVAPTGA…KGADHGTVKG (174 aa)) is molybdenum cofactor biosynthesis protein B.

This sequence in the N-terminal section; belongs to the MoaC family. The protein in the C-terminal section; belongs to the MoaB/Mog family.

The catalysed reaction is (8S)-3',8-cyclo-7,8-dihydroguanosine 5'-triphosphate = cyclic pyranopterin phosphate + diphosphate. Its pathway is cofactor biosynthesis; molybdopterin biosynthesis. Its function is as follows. Catalyzes the conversion of (8S)-3',8-cyclo-7,8-dihydroguanosine 5'-triphosphate to cyclic pyranopterin monophosphate (cPMP). The sequence is that of Molybdenum cofactor biosynthesis bifunctional protein (moaCB) from Synechococcus elongatus (strain ATCC 33912 / PCC 7942 / FACHB-805) (Anacystis nidulans R2).